A 66-amino-acid polypeptide reads, in one-letter code: UPF0370 protein CKO_00315 (66 aa).

A helical transmembrane segment spans residues 4–24 (LAKYWWILVLVFLVGVLINVI). Positions 39–66 (KPELPPHRDFNDKWDDDDDWPKKDQPKK) are disordered. A compositionally biased stretch (basic and acidic residues) spans 42 to 51 (LPPHRDFNDK).

Belongs to the UPF0370 family.

Its subcellular location is the cell membrane. This Citrobacter koseri (strain ATCC BAA-895 / CDC 4225-83 / SGSC4696) protein is UPF0370 protein CKO_00315.